The primary structure comprises 484 residues: Cobyric acid synthase (484 aa).

Residues 246 to 437 (ALRVVVPALP…VHGLFDTPAA (192 aa)) form the GATase cobBQ-type domain. The active-site Nucleophile is C327. Residue H429 is part of the active site.

It belongs to the CobB/CobQ family. CobQ subfamily.

Its pathway is cofactor biosynthesis; adenosylcobalamin biosynthesis. Its function is as follows. Catalyzes amidations at positions B, D, E, and G on adenosylcobyrinic A,C-diamide. NH(2) groups are provided by glutamine, and one molecule of ATP is hydrogenolyzed for each amidation. This Paraburkholderia phymatum (strain DSM 17167 / CIP 108236 / LMG 21445 / STM815) (Burkholderia phymatum) protein is Cobyric acid synthase.